The sequence spans 201 residues: FMN-dependent NADH:quinone oxidoreductase (201 aa).

FMN-binding positions include Ser-10, 16 to 18 (SQS), 96 to 99 (MYNF), and 140 to 143 (SRGG).

This sequence belongs to the azoreductase type 1 family. Homodimer. It depends on FMN as a cofactor.

It catalyses the reaction 2 a quinone + NADH + H(+) = 2 a 1,4-benzosemiquinone + NAD(+). It carries out the reaction N,N-dimethyl-1,4-phenylenediamine + anthranilate + 2 NAD(+) = 2-(4-dimethylaminophenyl)diazenylbenzoate + 2 NADH + 2 H(+). Functionally, quinone reductase that provides resistance to thiol-specific stress caused by electrophilic quinones. Its function is as follows. Also exhibits azoreductase activity. Catalyzes the reductive cleavage of the azo bond in aromatic azo compounds to the corresponding amines. This Cronobacter sakazakii (strain ATCC BAA-894) (Enterobacter sakazakii) protein is FMN-dependent NADH:quinone oxidoreductase.